We begin with the raw amino-acid sequence, 302 residues long: ATP synthase mitochondrial F1 complex assembly factor 1 (302 aa).

Belongs to the ATP11 family. Interacts with ATP5F1B; involved in the assembly of the F1 component of the mitochondrial ATP synthase (ATPase).

The protein resides in the mitochondrion inner membrane. Its function is as follows. Has a complex stabilizing activity in the assembly of the mitochondrial F1-F0 complex. The chain is ATP synthase mitochondrial F1 complex assembly factor 1 (atpaf1) from Danio rerio (Zebrafish).